The chain runs to 473 residues: MKTLYSLRRFYPVETLFNGTLALAGRDQETTGFAWWAGNARLINLSGKLLGAHVAHAGLIVFWAGAMNLFEVAHFVPEKPMYEQGFILLPHLATLGWGVGPGGEVIDTFPYFVSGVLHLISSAVLGFGGIYHALLGPETLEESFPFFGYVWKDRNKMTTILGIHLILLGIGAFLLVFKALSFGGVYDTWAPGGGDVRKITNLTLSPSVLFGYLLKSPFGGEGWIVSVDDLEDIIGGHVWLGSICILGGIWHILTKPFAWARRALVWSGEAYLSYSLGALSVFGFIACCFVWFNNTAYPSEFYGPTGPEASQAQAFTFLVRDQRLGANVGSAQGPTGLGKYLMRSPTGEVIFGGETMRFWDLRAPWLEPLRGPNGLDLSRLKKDIQPWQERRSAEYMTHAPLGSLNSVGGVATEINAVNYVSPRSWLATSHFVLGFFLFVGHLWHAGRARAAAAGFEKGIDRDFEPVLSMTPLN.

Positions 1–14 (MKTLYSLRRFYPVE) are excised as a propeptide. An N-acetylthreonine modification is found at Thr15. The residue at position 15 (Thr15) is a Phosphothreonine. 5 helical membrane passes run 69-93 (LFEV…PHLA), 134-155 (LLGP…KDRN), 178-200 (KALS…RKIT), 255-275 (KPFA…LSYS), and 291-312 (WFNN…ASQA). Glu367 contacts [CaMn4O5] cluster. The chain crosses the membrane as a helical span at residues 447–471 (RARAAAAGFEKGIDRDFEPVLSMTP).

This sequence belongs to the PsbB/PsbC family. PsbC subfamily. In terms of assembly, PSII is composed of 1 copy each of membrane proteins PsbA, PsbB, PsbC, PsbD, PsbE, PsbF, PsbH, PsbI, PsbJ, PsbK, PsbL, PsbM, PsbT, PsbX, PsbY, PsbZ, Psb30/Ycf12, at least 3 peripheral proteins of the oxygen-evolving complex and a large number of cofactors. It forms dimeric complexes. Binds multiple chlorophylls and provides some of the ligands for the Ca-4Mn-5O cluster of the oxygen-evolving complex. It may also provide a ligand for a Cl- that is required for oxygen evolution. PSII binds additional chlorophylls, carotenoids and specific lipids. serves as cofactor.

It is found in the plastid. The protein resides in the chloroplast thylakoid membrane. Its function is as follows. One of the components of the core complex of photosystem II (PSII). It binds chlorophyll and helps catalyze the primary light-induced photochemical processes of PSII. PSII is a light-driven water:plastoquinone oxidoreductase, using light energy to abstract electrons from H(2)O, generating O(2) and a proton gradient subsequently used for ATP formation. This Pelargonium hortorum (Common geranium) protein is Photosystem II CP43 reaction center protein.